The sequence spans 343 residues: Ribosomal RNA small subunit methyltransferase C (343 aa).

Belongs to the methyltransferase superfamily. RsmC family. As to quaternary structure, monomer.

The protein localises to the cytoplasm. The enzyme catalyses guanosine(1207) in 16S rRNA + S-adenosyl-L-methionine = N(2)-methylguanosine(1207) in 16S rRNA + S-adenosyl-L-homocysteine + H(+). Its function is as follows. Specifically methylates the guanine in position 1207 of 16S rRNA in the 30S particle. This chain is Ribosomal RNA small subunit methyltransferase C, found in Shigella flexneri serotype 5b (strain 8401).